A 155-amino-acid chain; its full sequence is Small ribosomal subunit protein uS7cz/uS7cy (155 aa).

This sequence belongs to the universal ribosomal protein uS7 family. Part of the 30S ribosomal subunit.

The protein resides in the plastid. Its subcellular location is the chloroplast. In terms of biological role, one of the primary rRNA binding proteins, it binds directly to 16S rRNA where it nucleates assembly of the head domain of the 30S subunit. This chain is Small ribosomal subunit protein uS7cz/uS7cy (rps7-A), found in Angiopteris evecta (Mule's foot fern).